Reading from the N-terminus, the 89-residue chain is Small ribosomal subunit protein bS20 (89 aa).

The protein belongs to the bacterial ribosomal protein bS20 family.

In terms of biological role, binds directly to 16S ribosomal RNA. The protein is Small ribosomal subunit protein bS20 of Helicobacter acinonychis (strain Sheeba).